A 307-amino-acid polypeptide reads, in one-letter code: UDP-3-O-acyl-N-acetylglucosamine deacetylase (307 aa).

Positions 78, 241, and 245 each coordinate Zn(2+). Residue His-268 is the Proton donor of the active site.

Belongs to the LpxC family. Zn(2+) serves as cofactor.

The catalysed reaction is a UDP-3-O-[(3R)-3-hydroxyacyl]-N-acetyl-alpha-D-glucosamine + H2O = a UDP-3-O-[(3R)-3-hydroxyacyl]-alpha-D-glucosamine + acetate. It functions in the pathway glycolipid biosynthesis; lipid IV(A) biosynthesis; lipid IV(A) from (3R)-3-hydroxytetradecanoyl-[acyl-carrier-protein] and UDP-N-acetyl-alpha-D-glucosamine: step 2/6. In terms of biological role, catalyzes the hydrolysis of UDP-3-O-myristoyl-N-acetylglucosamine to form UDP-3-O-myristoylglucosamine and acetate, the committed step in lipid A biosynthesis. This Variovorax paradoxus (strain S110) protein is UDP-3-O-acyl-N-acetylglucosamine deacetylase.